Reading from the N-terminus, the 390-residue chain is Magnesium-protoporphyrin IX monomethyl ester [oxidative] cyclase (390 aa).

Positions 1-20 (MSQSTIESTNKKEINKGKAP) are disordered.

Belongs to the AcsF family. The cofactor is Fe cation.

The catalysed reaction is Mg-protoporphyrin IX 13-monomethyl ester + 3 NADPH + 3 O2 + 2 H(+) = 3,8-divinyl protochlorophyllide a + 3 NADP(+) + 5 H2O. It participates in porphyrin-containing compound metabolism; chlorophyll biosynthesis (light-independent). Catalyzes the formation of the isocyclic ring in chlorophyll biosynthesis. Mediates the cyclase reaction, which results in the formation of divinylprotochlorophyllide (Pchlide) characteristic of all chlorophylls from magnesium-protoporphyrin IX 13-monomethyl ester (MgPMME). The sequence is that of Magnesium-protoporphyrin IX monomethyl ester [oxidative] cyclase from Prochlorococcus marinus (strain MIT 9301).